We begin with the raw amino-acid sequence, 3038 residues long: Lovastatin nonaketide synthase, polyketide synthase component (3038 aa).

Positions 8–447 constitute a Ketosynthase family 3 (KS3) domain; that stretch reads NEPIVVVGSG…GTNAHAIIEE (440 aa). Active-site for beta-ketoacyl synthase activity residues include Cys-181, His-320, and His-367. Residues 562 to 889 are malonyl-CoA:ACP transacylase (MAT) domain; sequence IFTGQGAQWP…GKNDLDTFSR (328 aa). The active-site For malonyltransferase activity is Ser-656. Residues 695 to 757 form a lovC-binding region; it reads AMLAAGMSFE…DESTFARLLR (63 aa). The N-terminal hotdog fold stretch occupies residues 953–1089; it reads HLLLGKLSEY…GQLALMIGDV (137 aa). The interval 953–1263 is dehydratase (DH) domain; it reads HLLLGKLSEY…ENITFKPFSP (311 aa). Residues 953 to 1267 enclose the PKS/mFAS DH domain; that stretch reads HLLLGKLSEY…FKPFSPPDAS (315 aa). His-985 serves as the catalytic Proton acceptor; for dehydratase activity. The C-terminal hotdog fold stretch occupies residues 1107 to 1267; it reads EEHPHMNRVN…FKPFSPPDAS (161 aa). Asp-1174 (proton donor; for dehydratase activity) is an active-site residue. Residues 1443–1543 are methyltransferase (CMet) domain; it reads LEIGAGTGGA…ARSLLKPGGQ (101 aa). Residues 2139-2437 form a ketoreductase (KR) domain region; that stretch reads TLPTRVRSID…KIPEYRGAKA (299 aa). One can recognise a Carrier domain in the interval 2463–2538; it reads QIVIDGLSAK…DLADEAAARL (76 aa). An O-(pantetheine 4'-phosphoryl)serine modification is found at Ser-2498. The disordered stretch occupies residues 2546–2602; sequence VAATDGGAESTDNTSENEVSGREDTDLSAAATITEPSSADEDDTEPGDEDVPRSHHP. The segment covering 2583–2594 has biased composition (acidic residues); that stretch reads SADEDDTEPGDE. Positions 2602–2952 are inactive Condensation domain; sequence PLSLGQEYSW…PTSNQPAPLL (351 aa).

As to quaternary structure, homodimer. Each MAT domain from the lovB homodimer binds one lovC molecule to form the final active lovB-lovC megasynthase complex. It depends on pantetheine 4'-phosphate as a cofactor.

It catalyses the reaction holo-[lovastatin nonaketide synthase] + 9 malonyl-CoA + S-adenosyl-L-methionine + 11 NADPH + 19 H(+) = dihydromonacolin L-[lovastatin nonaketide synthase] + S-adenosyl-L-homocysteine + 9 CO2 + 11 NADP(+) + 9 CoA + 6 H2O. The protein operates within polyketide biosynthesis; lovastatin biosynthesis. Functionally, lovastatin nonaketide synthase; part of the gene cluster that mediates the biosynthesis of lovastatin (also known as mevinolin, mevacor or monacolin K), a hypolipidemic inhibitor of (3S)-hydroxymethylglutaryl-coenzyme A (HMG-CoA) reductase (HMGR). The first step in the biosynthesis of lovastatin is the production of dihydromonacolin L acid by the lovastatin nonaketide synthase lovB and the trans-acting enoyl reductase lovC (called the lovB-lovC megasynthase complex) via condensation of one acetyl-CoA unit and 8 malonyl-CoA units. Dihydromonacolin L acid is released from lovB by the thioesterase lovG. Next, dihydromonacolin L acid is oxidized by the dihydromonacolin L monooxygenase lovA twice to form monacolin J acid. The 2-methylbutyrate moiety of lovastatin is synthesized by the lovastatin diketide synthase lovF via condensation of one acetyl-CoA unit and one malonyl-CoA unit. Finally, the covalent attachment of this moiety to monacolin J acid is catalyzed by the transesterase lovD to yield lovastatin. LovD has broad substrate specificity and can also convert monacolin J to simvastatin using alpha-dimethylbutanoyl-S-methyl-3-mercaptopropionate (DMB-S-MMP) as the thioester acyl donor, and can also catalyze the reverse reaction and function as hydrolase in vitro. LovD has much higher activity with LovF-bound 2-methylbutanoate than with free diketide substrates. The sequence is that of Lovastatin nonaketide synthase, polyketide synthase component (lovB) from Aspergillus terreus (strain NIH 2624 / FGSC A1156).